Consider the following 249-residue polypeptide: Glucosamine-6-phosphate deaminase (249 aa).

The active-site Proton acceptor; for enolization step is Asp-67. Asn-136 acts as the For ring-opening step in catalysis. The active-site Proton acceptor; for ring-opening step is His-138. The For ring-opening step role is filled by Glu-143.

Belongs to the glucosamine/galactosamine-6-phosphate isomerase family. NagB subfamily.

It catalyses the reaction alpha-D-glucosamine 6-phosphate + H2O = beta-D-fructose 6-phosphate + NH4(+). The protein operates within amino-sugar metabolism; N-acetylneuraminate degradation; D-fructose 6-phosphate from N-acetylneuraminate: step 5/5. Functionally, catalyzes the reversible isomerization-deamination of glucosamine 6-phosphate (GlcN6P) to form fructose 6-phosphate (Fru6P) and ammonium ion. The sequence is that of Glucosamine-6-phosphate deaminase from Clostridium botulinum (strain Alaska E43 / Type E3).